An 83-amino-acid chain; its full sequence is Gas vesicle protein G2 (83 aa).

The protein belongs to the gas vesicle GvpG family. GvpF to GvpM interact with each other in vitro, and may form multi-subunit complex(es).

The protein localises to the gas vesicle. In terms of biological role, proteins GvpF to GvpM might be involved in nucleating gas vesicle formation. A minor component of the gas vesicle. Gas vesicles are hollow, gas filled proteinaceous nanostructures found in several microbial planktonic microorganisms. They allow positioning of halobacteria at the optimal depth for growth in the poorly aerated, shallow brine pools of their habitat. Expression of 2 c-vac DNA fragments containing 2 divergently transcribed regions (gvpE-gvpF-gvpG-gvpH-gvpI-gvpJ-gvpK-gvpL-gvpM and gvpA-gvpC-gvpN-gvpO) allows H.volcanii to produce gas vesicles. The polypeptide is Gas vesicle protein G2 (Halobacterium salinarum (strain ATCC 700922 / JCM 11081 / NRC-1) (Halobacterium halobium)).